Here is a 151-residue protein sequence, read N- to C-terminus: Ribosome maturation factor RimP (151 aa).

The protein belongs to the RimP family.

The protein localises to the cytoplasm. In terms of biological role, required for maturation of 30S ribosomal subunits. This chain is Ribosome maturation factor RimP, found in Shewanella oneidensis (strain ATCC 700550 / JCM 31522 / CIP 106686 / LMG 19005 / NCIMB 14063 / MR-1).